Reading from the N-terminus, the 288-residue chain is Heme oxygenase 1 (288 aa).

Topologically, residues 1–265 (MERPQPDSMP…KPPLNTRSQA (265 aa)) are cytoplasmic. Residues Lys18, His25, Tyr134, and Arg183 each coordinate heme b. Residues 223 to 260 (HDTKDQSPSRAPGLRQRASNKVQDSAPVETPRGKPPLN) are disordered. A Phosphoserine modification is found at Ser229. A helical; Anchor for type IV membrane protein membrane pass occupies residues 266 to 288 (PLLRWVLTLSFLVATVAVGLYAM).

It belongs to the heme oxygenase family. As to quaternary structure, (Microbial infection) Interacts with SARS-CoV-2 ORF3A protein; the interaction promotes ORF3A-induced autophagy but is unlikely to be involved in ORF3A-mediated induction of reticulophagy. Homodimer and higher order homooligomer. Oligomerization is crucial for its stability and function in the endoplasmic reticulum. Interacts with FLVCR2; this interaction is potentiated in the presence of heme. Post-translationally, a soluble form arises by proteolytic removal of the membrane anchor. Expressed at higher levels in renal cancer tissue than in normal tissue (at protein level).

The protein resides in the endoplasmic reticulum membrane. It catalyses the reaction heme b + 3 reduced [NADPH--hemoprotein reductase] + 3 O2 = biliverdin IXalpha + CO + Fe(2+) + 3 oxidized [NADPH--hemoprotein reductase] + 3 H2O + H(+). Its function is as follows. Catalyzes the oxidative cleavage of heme at the alpha-methene bridge carbon, released as carbon monoxide (CO), to generate biliverdin IXalpha, while releasing the central heme iron chelate as ferrous iron. Affords protection against programmed cell death and this cytoprotective effect relies on its ability to catabolize free heme and prevent it from sensitizing cells to undergo apoptosis. Functionally, (Microbial infection) During SARS-COV-2 infection, promotes SARS-CoV-2 ORF3A-mediated autophagy but is unlikely to be required for ORF3A-mediated induction of reticulophagy. Catalyzes the oxidative cleavage of heme at the alpha-methene bridge carbon, released as carbon monoxide (CO), to generate biliverdin IXalpha, while releasing the central heme iron chelate as ferrous iron. The protein is Heme oxygenase 1 (HMOX1) of Homo sapiens (Human).